A 68-amino-acid polypeptide reads, in one-letter code: Protein transport protein Sec61 subunit gamma (68 aa).

Residues 1–32 (MDQVMQFVEPSRQFVKDSIRLVKRCTKPDRKE) lie on the Cytoplasmic side of the membrane. The helical transmembrane segment at 33–61 (FQKIAMATAIGFAIMGFIGFFVKLIHIPI) threads the bilayer. At 62-68 (NNIIVGS) the chain is on the extracellular side.

The protein belongs to the SecE/SEC61-gamma family. As to quaternary structure, the SEC61 channel-forming translocon complex consists of channel-forming core components SEC61A1, SEC61B and SEC61G and different auxiliary components such as SEC62 and SEC63. The SEC61 channel associates with the multi-pass translocon (MPT) complex.

The protein resides in the endoplasmic reticulum membrane. Functionally, component of SEC61 channel-forming translocon complex that mediates transport of signal peptide-containing precursor polypeptides across the endoplasmic reticulum (ER). Forms a ribosome receptor and a gated pore in the ER membrane, both functions required for cotranslational translocation of nascent polypeptides. The SEC61 channel is also involved in ER membrane insertion of transmembrane proteins: it mediates membrane insertion of the first few transmembrane segments of proteins, while insertion of subsequent transmembrane regions of multi-pass membrane proteins is mediated by the multi-pass translocon (MPT) complex. The protein is Protein transport protein Sec61 subunit gamma (sec61g) of Xenopus laevis (African clawed frog).